Reading from the N-terminus, the 932-residue chain is Protein translocase subunit SecA (932 aa).

ATP contacts are provided by residues Gln86, 104-108 (GEGKT), and Asp494. A disordered region spans residues 857–932 (EDAGAEAHAS…KPAPKRKKRR (76 aa)). Positions 905 to 915 (TAGSAGDSNLP) are enriched in polar residues. The segment covering 920–932 (KTNKPAPKRKKRR) has biased composition (basic residues).

Belongs to the SecA family. Monomer and homodimer. Part of the essential Sec protein translocation apparatus which comprises SecA, SecYEG and auxiliary proteins SecDF. Other proteins may also be involved.

The protein localises to the cell membrane. It localises to the cytoplasm. The catalysed reaction is ATP + H2O + cellular proteinSide 1 = ADP + phosphate + cellular proteinSide 2.. Functionally, part of the Sec protein translocase complex. Interacts with the SecYEG preprotein conducting channel. Has a central role in coupling the hydrolysis of ATP to the transfer of proteins into and across the cell membrane, serving as an ATP-driven molecular motor driving the stepwise translocation of polypeptide chains across the membrane. The protein is Protein translocase subunit SecA of Renibacterium salmoninarum (strain ATCC 33209 / DSM 20767 / JCM 11484 / NBRC 15589 / NCIMB 2235).